The primary structure comprises 523 residues: 2-isopropylmalate synthase (523 aa).

Residues 5–267 (VIIFDTTLRD…HTRINHQEIW (263 aa)) form the Pyruvate carboxyltransferase domain. Positions 14, 202, 204, and 238 each coordinate Mn(2+). The tract at residues 392 to 523 (RLDYFSVQSG…QNKENNKETV (132 aa)) is regulatory domain.

Belongs to the alpha-IPM synthase/homocitrate synthase family. LeuA type 1 subfamily. In terms of assembly, homodimer. Requires Mn(2+) as cofactor.

The protein resides in the cytoplasm. It carries out the reaction 3-methyl-2-oxobutanoate + acetyl-CoA + H2O = (2S)-2-isopropylmalate + CoA + H(+). It functions in the pathway amino-acid biosynthesis; L-leucine biosynthesis; L-leucine from 3-methyl-2-oxobutanoate: step 1/4. Its function is as follows. Catalyzes the condensation of the acetyl group of acetyl-CoA with 3-methyl-2-oxobutanoate (2-ketoisovalerate) to form 3-carboxy-3-hydroxy-4-methylpentanoate (2-isopropylmalate). The chain is 2-isopropylmalate synthase from Citrobacter koseri (strain ATCC BAA-895 / CDC 4225-83 / SGSC4696).